The sequence spans 218 residues: Transaldolase (218 aa).

Lys-83 serves as the catalytic Schiff-base intermediate with substrate.

The protein belongs to the transaldolase family. Type 3B subfamily.

The protein localises to the cytoplasm. The catalysed reaction is D-sedoheptulose 7-phosphate + D-glyceraldehyde 3-phosphate = D-erythrose 4-phosphate + beta-D-fructose 6-phosphate. It participates in carbohydrate degradation; pentose phosphate pathway; D-glyceraldehyde 3-phosphate and beta-D-fructose 6-phosphate from D-ribose 5-phosphate and D-xylulose 5-phosphate (non-oxidative stage): step 2/3. Transaldolase is important for the balance of metabolites in the pentose-phosphate pathway. Does not show fructose-6-P aldolase activity. In Thermotoga maritima (strain ATCC 43589 / DSM 3109 / JCM 10099 / NBRC 100826 / MSB8), this protein is Transaldolase (tal).